Reading from the N-terminus, the 340-residue chain is Fructose-1,6-bisphosphatase class 1 (340 aa).

Residues glutamate 107, aspartate 126, leucine 128, and aspartate 129 each coordinate Mg(2+). Asparagine 215 provides a ligand contact to substrate. A Mg(2+)-binding site is contributed by glutamate 287.

Belongs to the FBPase class 1 family. Homotetramer. The cofactor is Mg(2+).

The protein resides in the cytoplasm. The catalysed reaction is beta-D-fructose 1,6-bisphosphate + H2O = beta-D-fructose 6-phosphate + phosphate. It participates in carbohydrate biosynthesis; gluconeogenesis. In Brucella ovis (strain ATCC 25840 / 63/290 / NCTC 10512), this protein is Fructose-1,6-bisphosphatase class 1.